The sequence spans 51 residues: uncharacterized protein (51 aa).

This is an uncharacterized protein from Saccharomyces cerevisiae (strain ATCC 204508 / S288c) (Baker's yeast).